A 460-amino-acid chain; its full sequence is Homocitrate synthase (460 aa).

In terms of domain architecture, Pyruvate carboxyltransferase spans 3–258; that stretch reads VGILDSTLRE…IEVVKLNKLQ (256 aa). 2-oxoglutarate is bound at residue arginine 11. A Mg(2+)-binding site is contributed by glutamate 12. 2-oxoglutarate contacts are provided by histidine 75, arginine 135, and threonine 169. Residues histidine 197 and histidine 199 each coordinate Mg(2+). The Proton acceptor role is filled by histidine 291.

This sequence belongs to the alpha-IPM synthase/homocitrate synthase family. Homocitrate synthase LYS20/LYS21 subfamily. In terms of assembly, forms a homotetramer in the absence of lysine, and is in hexadecamer-octamer equilibrium in the presence of lysine. Mg(2+) serves as cofactor. It depends on Mn(2+) as a cofactor.

The enzyme catalyses acetyl-CoA + 2-oxoglutarate + H2O = (2R)-homocitrate + CoA + H(+). It participates in amino-acid biosynthesis; L-lysine biosynthesis via AAA pathway; L-alpha-aminoadipate from 2-oxoglutarate: step 1/5. Its activity is regulated as follows. Inhibited by lysine. Catalyzes the aldol-type condensation of 2-oxoglutarate with acetyl-CoA to yield homocitrate. Carries out the first step of the alpha-aminoadipate (AAA) lysine biosynthesis pathway. This chain is Homocitrate synthase, found in Sulfurisphaera tokodaii (strain DSM 16993 / JCM 10545 / NBRC 100140 / 7) (Sulfolobus tokodaii).